A 58-amino-acid polypeptide reads, in one-letter code: Small ribosomal subunit protein bS21 (58 aa).

This sequence belongs to the bacterial ribosomal protein bS21 family.

This Lacticaseibacillus paracasei (strain ATCC 334 / BCRC 17002 / CCUG 31169 / CIP 107868 / KCTC 3260 / NRRL B-441) (Lactobacillus paracasei) protein is Small ribosomal subunit protein bS21.